The chain runs to 972 residues: Multiple C2 domain and transmembrane region protein 8 (972 aa).

A C2 1 domain is found at 1–107 (MMSNLKLGVE…PYSEAVGLPY (107 aa)). The segment at 142–203 (PNLISTKKIP…MMESSLYQAP (62 aa)) is disordered. Residues 150-159 (IPSKSRHKFH) are compositionally biased toward basic residues. Residues 161 to 173 (IPTNESNHSPRGN) show a composition bias toward polar residues. Residues 179–194 (PQPPPPQSQTALPPPM) show a composition bias toward pro residues. C2 domains are found at residues 232 to 352 (GGGK…PEWY), 384 to 507 (ALNA…NRWF), and 543 to 669 (YSSD…SHSY). Ca(2+)-binding residues include Asp-265, Asp-271, Asp-318, Asp-320, and Asp-325. Helical transmembrane passes span 803–823 (IIFL…SLCL) and 924–944 (TVVL…LYIM).

It belongs to the MCTP family. Ca(2+) serves as cofactor. Expressed in root hairs.

It localises to the membrane. The protein resides in the vesicle. Functionally, may function as a signaling molecule by regulating the trafficking of other regulators. The polypeptide is Multiple C2 domain and transmembrane region protein 8 (Arabidopsis thaliana (Mouse-ear cress)).